Here is an 89-residue protein sequence, read N- to C-terminus: Small ribosomal subunit protein uS15 (89 aa).

This sequence belongs to the universal ribosomal protein uS15 family. In terms of assembly, part of the 30S ribosomal subunit. Forms a bridge to the 50S subunit in the 70S ribosome, contacting the 23S rRNA.

Its function is as follows. One of the primary rRNA binding proteins, it binds directly to 16S rRNA where it helps nucleate assembly of the platform of the 30S subunit by binding and bridging several RNA helices of the 16S rRNA. Forms an intersubunit bridge (bridge B4) with the 23S rRNA of the 50S subunit in the ribosome. In Shewanella denitrificans (strain OS217 / ATCC BAA-1090 / DSM 15013), this protein is Small ribosomal subunit protein uS15.